Here is a 359-residue protein sequence, read N- to C-terminus: MTGDLNEFVAHFWPVRVVFGAGSTERIPAEVKRLGARRALVLCTPDQRDLAQRVLGDLGDLGAGFHDGAVMHVPEASVTRAAQAARDADADLLVAVGGGSTIGLAKALALHHGMRFVALPTTYAGSEMTPIWGLTADGAKRTGRDPRVLPSTVLYDPHHLTSLPPEVTGPSGMNAIAHAVESMYAPDRNPITMLLAEESIRAMAQGLPVAVDSPGDLDARTRTLYAAWLAGTVLGMVSMGLHHKLCHVLGGRFNLPHAPMHAVLLPHVAAFNEVAAPAELGRVAAALGAPGPGGAGAALHALLRFTCTERSLAAIGMPAQGIYDAAEHALADAYANPRQASREDIARLLRAAFTGEMPA.

It belongs to the iron-containing alcohol dehydrogenase family. Homodimer.

It carries out the reaction 3-oxoadipate + NAD(+) = maleylacetate + NADH + H(+). The enzyme catalyses 3-oxoadipate + NADP(+) = maleylacetate + NADPH + H(+). The protein operates within aromatic compound metabolism; 3-chlorocatechol degradation. Its activity is regulated as follows. Inhibited by p-chloromercuribenzoate and by 3-oxoadipate, and, in a temperature-dependent manner, by manganese. In terms of biological role, plays a major role in the degradation of chloroaromatic compounds by channeling maleylacetate and some of its substituted derivatives into the 3-oxoadipate pathway. This enzyme converts maleylacetate and 2-chloromaleylacetate with similar efficiencies. NADH is preferred to NADPH as the cosubstrate. In Cupriavidus pinatubonensis (strain JMP 134 / LMG 1197) (Cupriavidus necator (strain JMP 134)), this protein is Maleylacetate reductase 2 (tfdFII).